The following is a 154-amino-acid chain: Putative lipoprotein MAB_4074c (154 aa).

The first 21 residues, 1–21, serve as a signal peptide directing secretion; sequence MMNRVIVGAMGLLAAGAVVVG. Residue cysteine 22 is the site of N-palmitoyl cysteine attachment. Cysteine 22 carries S-diacylglycerol cysteine lipidation.

This sequence belongs to the mycobacterial 19 kDa antigen family.

It is found in the cell membrane. This Mycobacteroides abscessus (strain ATCC 19977 / DSM 44196 / CCUG 20993 / CIP 104536 / JCM 13569 / NCTC 13031 / TMC 1543 / L948) (Mycobacterium abscessus) protein is Putative lipoprotein MAB_4074c.